The sequence spans 79 residues: Antimicrobial peptide UyCT1 (79 aa).

The first 23 residues, 1–23 (MKTQLAFLAITVILMQLFAQTEA), serve as a signal peptide directing secretion. Ile37 is subject to Isoleucine amide. Positions 41–79 (GLRNVDQIADLFDSGLSDADDLFDSGLSDADAKFMKMFM) are excised as a propeptide.

It belongs to the non-disulfide-bridged peptide (NDBP) superfamily. Short antimicrobial peptide (group 4) family. Expressed by the venom gland.

It is found in the secreted. Its subcellular location is the target cell membrane. Functionally, inhibits the growth of Gram-positive (S.aureus, MIC=15 uM) and Gram-negative bacteria (E.coli, MIC=10 uM and P.aeruginosa, MIC=10 uM). It also shows 26% of hemolysis when 15 uM are tested (81% at 50 uM). In terms of biological role, inhibits the growth of Gram-negative bacteria (E.coli, MIC=25 uM and P.aeruginosa, MIC=40 uM). It also shows 7% of hemolysis when 50 uM are tested. Does not show activity against the Gram-positive bacteria S.aureus. This is Antimicrobial peptide UyCT1 from Urodacus yaschenkoi (Inland robust scorpion).